A 603-amino-acid chain; its full sequence is DNA-directed RNA polymerase subunit beta' N-terminal section (603 aa).

4 residues coordinate Zn(2+): Cys-283, Cys-285, Cys-329, and Cys-332.

This sequence belongs to the RNA polymerase beta' chain family. RpoC1 subfamily. In terms of assembly, in plastids the minimal PEP RNA polymerase catalytic core is composed of four subunits: alpha, beta, beta', and beta''. When a (nuclear-encoded) sigma factor is associated with the core the holoenzyme is formed, which can initiate transcription. Zn(2+) is required as a cofactor.

The protein localises to the plastid. It is found in the chloroplast. It catalyses the reaction RNA(n) + a ribonucleoside 5'-triphosphate = RNA(n+1) + diphosphate. In terms of biological role, DNA-dependent RNA polymerase catalyzes the transcription of DNA into RNA using the four ribonucleoside triphosphates as substrates. This is DNA-directed RNA polymerase subunit beta' N-terminal section (rpoC1A) from Chlamydomonas reinhardtii (Chlamydomonas smithii).